The following is a 167-amino-acid chain: Xanthine-guanine phosphoribosyltransferase (167 aa).

5-phospho-alpha-D-ribose 1-diphosphate-binding positions include 47-48 (RG), Q79, and 102-110 (DDLVDSGKT). Q79 lines the GMP pocket. Residue D103 coordinates Mg(2+). Residues D106 and I149 each contribute to the guanine site. D106 and I149 together coordinate xanthine. Residues 106–110 (DSGKT) and 148–149 (WI) contribute to the GMP site.

It belongs to the purine/pyrimidine phosphoribosyltransferase family. XGPT subfamily. As to quaternary structure, homotetramer. The cofactor is Mg(2+).

The protein resides in the cell inner membrane. It catalyses the reaction GMP + diphosphate = guanine + 5-phospho-alpha-D-ribose 1-diphosphate. It carries out the reaction XMP + diphosphate = xanthine + 5-phospho-alpha-D-ribose 1-diphosphate. The enzyme catalyses IMP + diphosphate = hypoxanthine + 5-phospho-alpha-D-ribose 1-diphosphate. Its pathway is purine metabolism; GMP biosynthesis via salvage pathway; GMP from guanine: step 1/1. The protein operates within purine metabolism; XMP biosynthesis via salvage pathway; XMP from xanthine: step 1/1. Functionally, purine salvage pathway enzyme that catalyzes the transfer of the ribosyl-5-phosphate group from 5-phospho-alpha-D-ribose 1-diphosphate (PRPP) to the N9 position of the 6-oxopurines guanine and xanthine to form the corresponding ribonucleotides GMP (guanosine 5'-monophosphate) and XMP (xanthosine 5'-monophosphate), with the release of PPi. To a lesser extent, also acts on hypoxanthine. The polypeptide is Xanthine-guanine phosphoribosyltransferase (Cereibacter sphaeroides (strain ATCC 17025 / ATH 2.4.3) (Rhodobacter sphaeroides)).